The chain runs to 70 residues: Probable U6 snRNA-associated Sm-like protein (70 aa).

Residues 3-70 (DPFCFLKMYL…ILFVGPRLLL (68 aa)) form the Sm domain.

The protein belongs to the snRNP Sm proteins family.

The protein localises to the nucleus. Binds specifically to the 3'-terminal U-tract of U6 snRNA. The chain is Probable U6 snRNA-associated Sm-like protein from Encephalitozoon cuniculi (strain GB-M1) (Microsporidian parasite).